Reading from the N-terminus, the 550-residue chain is Dihydroxy-acid dehydratase (550 aa).

Aspartate 78 lines the Mg(2+) pocket. Cysteine 119 lines the [2Fe-2S] cluster pocket. Residues aspartate 120 and lysine 121 each contribute to the Mg(2+) site. Position 121 is an N6-carboxylysine (lysine 121). Cysteine 191 serves as a coordination point for [2Fe-2S] cluster. Glutamate 440 serves as a coordination point for Mg(2+). The active-site Proton acceptor is serine 466.

It belongs to the IlvD/Edd family. In terms of assembly, homodimer. The cofactor is [2Fe-2S] cluster. Mg(2+) is required as a cofactor.

It carries out the reaction (2R)-2,3-dihydroxy-3-methylbutanoate = 3-methyl-2-oxobutanoate + H2O. The catalysed reaction is (2R,3R)-2,3-dihydroxy-3-methylpentanoate = (S)-3-methyl-2-oxopentanoate + H2O. It participates in amino-acid biosynthesis; L-isoleucine biosynthesis; L-isoleucine from 2-oxobutanoate: step 3/4. Its pathway is amino-acid biosynthesis; L-valine biosynthesis; L-valine from pyruvate: step 3/4. Functions in the biosynthesis of branched-chain amino acids. Catalyzes the dehydration of (2R,3R)-2,3-dihydroxy-3-methylpentanoate (2,3-dihydroxy-3-methylvalerate) into 2-oxo-3-methylpentanoate (2-oxo-3-methylvalerate) and of (2R)-2,3-dihydroxy-3-methylbutanoate (2,3-dihydroxyisovalerate) into 2-oxo-3-methylbutanoate (2-oxoisovalerate), the penultimate precursor to L-isoleucine and L-valine, respectively. This is Dihydroxy-acid dehydratase from Methanococcus maripaludis (strain C7 / ATCC BAA-1331).